The sequence spans 366 residues: CD44 antigen (366 aa).

The signal sequence occupies residues 1–20; that stretch reads MDTFWWRAAWGLCLVQLSLA. The Extracellular segment spans residues 21–273; that stretch reads QIDLNITCRY…GPMRKPQIPE (253 aa). N-linked (GlcNAc...) asparagine glycosylation occurs at Asn25. Disulfide bonds link Cys28–Cys129, Cys53–Cys118, and Cys77–Cys97. Residues 32 to 120 enclose the Link domain; that stretch reads GVFHVEKNGR…TSQYDTICFN (89 aa). Residue Arg41 participates in hyaluronan binding. Residue Asn57 is glycosylated (N-linked (GlcNAc...) asparagine). Positions 78 and 79 each coordinate hyaluronan. Asn100 carries N-linked (GlcNAc...) asparagine glycosylation. Tyr105 lines the hyaluronan pocket. 2 N-linked (GlcNAc...) asparagine glycosylation sites follow: Asn110 and Asn120. The span at 156-165 shows a compositional bias: basic and acidic residues; the sequence is TKKGEYRTNP. The interval 156 to 266 is disordered; the sequence is TKKGEYRTNP…HGANTTSGPM (111 aa). Residues 184 to 196 show a composition bias toward low complexity; the sequence is SSGSPSERSTSGG. Ser185 is a glycosylation site (O-linked (Xyl...) (chondroitin sulfate) serine). Residue Asn222 is glycosylated (N-linked (GlcNAc...) asparagine). Residues 222-231 are compositionally biased toward basic and acidic residues; that stretch reads NTSDTRDYGS. The tract at residues 229–273 is stem; sequence YGSSHDPSGRSYTTHASESAGHSSGSEEHGANTTSGPMRKPQIPE. The span at 243–252 shows a compositional bias: low complexity; that stretch reads HASESAGHSS. Residue Asn260 is glycosylated (N-linked (GlcNAc...) asparagine). A helical transmembrane segment spans residues 274 to 294; it reads WLIILASLLALALILAVCIAV. The Cytoplasmic portion of the chain corresponds to 295 to 366; sequence NSRRRCGQKK…LQNVDMKIGV (72 aa). Residue Ser296 is modified to Phosphoserine; by PKC. A required for interaction with EZR, MSN and RDX and for co-localization to microvilli region spans residues 297–315; the sequence is RRRCGQKKKLVINNGNGTM. The residue at position 314 (Thr314) is a Phosphothreonine. Phosphoserine occurs at positions 321 and 330.

In terms of assembly, interacts with PKN2. Interacts with TIAM1 and TIAM2. Interacts with HA, as well as other glycosaminoglycans, collagen, laminin, and fibronectin via its N-terminal segment. Interacts with UNC119. Interacts with PDPN (via extracellular domain); this interaction is required for PDPN-mediated directional migration and regulation of lamellipodia extension/stabilization during cell spreading and migration. Interacts with RDX, EZR and MSN. Interacts with EGFR. Interacts with CD74; this complex is essential for the MIF-induced signaling cascade that results in B cell survival. Post-translationally, N-glycosylated. In terms of processing, O-glycosylated; contains chondroitin sulfate glycans which can be more or less sulfated. Phosphorylated; activation of PKC results in the dephosphorylation of Ser-330 (constitutive phosphorylation site), and the phosphorylation of Ser-296. Mesenteric lymph node and liver, not in heart.

It is found in the cell membrane. The protein resides in the cell projection. It localises to the microvillus. Its subcellular location is the secreted. Functionally, cell-surface receptor that plays a role in cell-cell interactions, cell adhesion and migration, helping them to sense and respond to changes in the tissue microenvironment. Participates thereby in a wide variety of cellular functions including the activation, recirculation and homing of T-lymphocytes, hematopoiesis, inflammation and response to bacterial infection. Engages, through its ectodomain, extracellular matrix components such as hyaluronan/HA, collagen, growth factors, cytokines or proteases and serves as a platform for signal transduction by assembling, via its cytoplasmic domain, protein complexes containing receptor kinases and membrane proteases. Such effectors include PKN2, the RhoGTPases RAC1 and RHOA, Rho-kinases and phospholipase C that coordinate signaling pathways promoting calcium mobilization and actin-mediated cytoskeleton reorganization essential for cell migration and adhesion. This chain is CD44 antigen (CD44), found in Bos taurus (Bovine).